Reading from the N-terminus, the 986-residue chain is MAGIFYFILFSFLFGICDAVTGSRVYPANEVTLLDSRSVQGELGWIASPLEGGWEEVSIMDEKNTPIRTYQVCNVMEASQNNWLRTDWITREGAQRVYIEIKFTLRDCNSLPGVMGTCKETFNLYYYESDNDKERFIRESQFGKIDTIAADESFTQVDIGDRIMKLNTEIRDVGPLSKKGFYLAFQDVGACIALVSVRVFYKKCPLTVRNLAQFPDTITGADTSSLVEVRGSCVNNSEEKDVPKMYCGADGEWLVPIGNCLCNAGHEEQNGECQACKIGYYKALSTDASCAKCPPHSYSVWEGATSCTCDRGFFRADNDAASMPCTRPPSAPLNLISNVNETSVNLEWSSPQNTGGRQDISYNVVCKKCGAGDPSKCRPCGSGVHYTPQQNGLKTTRVSITDLLAHTNYTFEIWAVNGVSKYNPSPDQSVSVTVTTNQAAPSSIALVQAKEVTRYSVALAWLEPDRPNGVILEYEVKYYEKDQNERSYRIVRTAARNTDIKGLNPLTSYVFHVRARTAAGYGDFSEPLEVTTNTVPSRIIGDGANSTVLLVSVSGSVVLVVILIAAFVISRRRSKYSKAKQEADEEKHLNQGVRTYVDPFTYEDPNQAVREFAKEIDASCIKIEKVIGVGEFGEVCSGRLKVPGKREICVAIKTLKAGYTDKQRRDFLSEASIMGQFDHPNIIHLEGVVTKCKPVMIITEYMENGSLDAFLRKNDGRFTVIQLVGMLRGIGSGMKYLSDMSYVHRDLAARNILVNSNLVCKVSDFGMSRVLEDDPEAAYTTRGGKIPIRWTAPEAIAYRKFTSASDVWSYGIVMWEVMSYGERPYWDMSNQDVIKAIEEGYRLPPPMDCPIALHQLMLDCWQKERSDRPKFGQIVNMLDKLIRNPNSLKRTGSESSRPNTALLDPSSPEFSAVVSVGDWLQAIKMDRYKDNFTAAGYTTLEAVVHMSQDDLARIGITAITHQNKILSSVQAMRTQMQQMHGRMVPV.

A signal peptide spans 1-19 (MAGIFYFILFSFLFGICDA). Over 20–547 (VTGSRVYPAN…RIIGDGANST (528 aa)) the chain is Extracellular. The region spanning 30 to 209 (EVTLLDSRSV…FYKKCPLTVR (180 aa)) is the Eph LBD domain. Asparagine 235, asparagine 340, and asparagine 408 each carry an N-linked (GlcNAc...) asparagine glycan. Fibronectin type-III domains are found at residues 328–439 (PPSA…TNQA) and 440–537 (APSS…TVPS). Residues 548 to 569 (VLLVSVSGSVVLVVILIAAFVI) form a helical membrane-spanning segment. At 570 to 986 (SRRRSKYSKA…QQMHGRMVPV (417 aa)) the chain is on the cytoplasmic side. A phosphotyrosine; by autocatalysis mark is found at tyrosine 596 and tyrosine 602. The Protein kinase domain occupies 621 to 882 (IKIEKVIGVG…QIVNMLDKLI (262 aa)). Residues 627-635 (IGVGEFGEV) and lysine 653 each bind ATP. The active-site Proton acceptor is aspartate 746. 2 positions are modified to phosphotyrosine; by autocatalysis: tyrosine 779 and tyrosine 928. Residues 911–975 (SAVVSVGDWL…LSSVQAMRTQ (65 aa)) form the SAM domain. The PDZ-binding motif lies at 984-986 (VPV).

It belongs to the protein kinase superfamily. Tyr protein kinase family. Ephrin receptor subfamily. Heterotetramer upon binding of the ligand. The heterotetramer is composed of an ephrin dimer and a receptor dimer. Oligomerization is probably required to induce biological responses. Interacts (phosphorylated at position Tyr-602) with FYN. Interacts (via PDZ motif) with SIPA1L1 (via PDZ domain); controls neuronal morphology through regulation of the RAP1 (RAP1A or RAP1B) and RAP2 (RAP2A, RAP2B or RAP2C) GTPases. Interacts with CDK5, CDK5R1 and NGEF; upon activation by EFNA1 induces NGEF phosphorylation by the kinase CDK5. Interacts with CHN1; effector of EPHA4 in axon guidance linking EPHA4 activation to RAC1 regulation. Forms a ternary complex composed of ADAM10, CADH1 and EPHA4; within the complex, CADH1 is cleaved by ADAM10 which disrupts adherens junctions. In terms of tissue distribution, expressed in inner and outer pillar cells of the organ of Corti (at protein level). Highest expression in the adult brain and retina and also detectable in kidney, lung, skeletal muscle and thymus. Not detected in heart and liver. Expressed in myogenic progenitor cells.

The protein localises to the cell membrane. It localises to the cell projection. The protein resides in the axon. Its subcellular location is the dendrite. It is found in the postsynaptic density membrane. The protein localises to the early endosome. It localises to the cell junction. The protein resides in the adherens junction. It carries out the reaction L-tyrosyl-[protein] + ATP = O-phospho-L-tyrosyl-[protein] + ADP + H(+). Receptor tyrosine kinase which binds membrane-bound ephrin family ligands residing on adjacent cells, leading to contact-dependent bidirectional signaling into neighboring cells. The signaling pathway downstream of the receptor is referred to as forward signaling while the signaling pathway downstream of the ephrin ligand is referred to as reverse signaling. Highly promiscuous, it has the unique property among Eph receptors to bind and to be physiologically activated by both GPI-anchored ephrin-A and transmembrane ephrin-B ligands including EFNA1 and EFNB3. Upon activation by ephrin ligands, modulates cell morphology and integrin-dependent cell adhesion through regulation of the Rac, Rap and Rho GTPases activity. Plays an important role in the development of the nervous system controlling different steps of axonal guidance including the establishment of the corticospinal projections. May also control the segregation of motor and sensory axons during neuromuscular circuit developmen. In addition to its role in axonal guidance plays a role in synaptic plasticity. Activated by EFNA1 phosphorylates CDK5 at 'Tyr-15' which in turn phosphorylates NGEF regulating RHOA and dendritic spine morphogenesis. In the nervous system, also plays a role in repair after injury preventing axonal regeneration and in angiogenesis playing a role in central nervous system vascular formation. Additionally, its promiscuity makes it available to participate in a variety of cell-cell signaling regulating for instance the development of the thymic epithelium. During development of the cochlear organ of Corti, regulates pillar cell separation by forming a ternary complex with ADAM10 and CADH1 which facilitates the cleavage of CADH1 by ADAM10 and disruption of adherens junctions. Phosphorylates CAPRIN1, promoting CAPRIN1-dependent formation of a membraneless compartment. The polypeptide is Ephrin type-A receptor 4 (Epha4) (Mus musculus (Mouse)).